A 299-amino-acid chain; its full sequence is Endonuclease G, mitochondrial (299 aa).

Residues 1 to 48 (MQLLRAGLTLALGAGLGAAAESWWRQRADARATPGLLSRLPVLPVAAA) constitute a mitochondrion transit peptide. The residue at position 130 (T130) is a Phosphothreonine. The active-site Proton acceptor is the H143. N174 is a Mg(2+) binding site. Residues 288–298 (AGSLKAITAGS) are essential for deoxyribonuclease activity. Residue S290 is modified to Phosphoserine.

The protein belongs to the DNA/RNA non-specific endonuclease family. Homodimer; disulfide-linked. Homodimerization is essential for its activity. Interacts with YWHAG. It depends on Mg(2+) as a cofactor. Post-translationally, GSK3-beta-mediated dual phosphorylations at Thr-130 and Ser-290 is necessary for its interaction with YWHAG and the induction of autophagy.

The protein localises to the mitochondrion. In terms of biological role, endonuclease that preferentially catalyzes the cleavage of double-stranded 5-hydroxymethylcytosine (5hmC)-modified DNA. The 5hmC-modified nucleotide does not increase the binding affinity, but instead increases the efficiency of cutting and specifies the site of cleavage for the modified DNAs. Shows significantly higher affinity for four- stranded Holliday junction over duplex and single-stranded DNAs. Promotes conservative recombination when the DNA is 5hmC-modified. Promotes autophagy through the suppression of mTOR by its phosphorylation-mediated interaction with YWHAG and its endonuclease activity-mediated DNA damage response. GSK3-beta mediated phosphorylation of ENDOG enhances its interaction with YWHAG, leading to the release of TSC2 and PIK3C3 from YWHAG resulting in mTOR pathway suppression and autophagy initiation. Promotes cleavage of mtDNA in response to oxidative and nitrosative stress, in turn inducing compensatory mtDNA replication. The protein is Endonuclease G, mitochondrial (ENDOG) of Bos taurus (Bovine).